A 188-amino-acid chain; its full sequence is Probable RNA 2'-phosphotransferase (188 aa).

This sequence belongs to the KptA/TPT1 family.

Functionally, removes the 2'-phosphate from RNA via an intermediate in which the phosphate is ADP-ribosylated by NAD followed by a presumed transesterification to release the RNA and generate ADP-ribose 1''-2''-cyclic phosphate (APPR&gt;P). May function as an ADP-ribosylase. The sequence is that of Probable RNA 2'-phosphotransferase from Pseudomonas savastanoi pv. phaseolicola (strain 1448A / Race 6) (Pseudomonas syringae pv. phaseolicola (strain 1448A / Race 6)).